Here is a 314-residue protein sequence, read N- to C-terminus: DDRGK domain-containing protein 1 (314 aa).

A helical membrane pass occupies residues 1 to 28 (MVAPVWYLVAAALLVGFILFLTRSRGRA). Positions 1-114 (MVAPVWYLVA…VEKPAETHLS (114 aa)) are mediates interaction with CDK5RAP3. Topologically, residues 29–314 (ASAGQEPLHN…GRESPAQAPA (286 aa)) are cytoplasmic. 2 disordered regions span residues 31-75 (AGQE…SRLQ) and 100-186 (QEEE…QREH). Phosphoserine is present on residues S72 and S114. Residues 118–216 (GAKKLRKLEE…MTEEQSQSFL (99 aa)) form a mediates interaction with TRIP4 region. The span at 124–186 (KLEEKQARKA…AREEQAQREH (63 aa)) shows a compositional bias: basic and acidic residues. The UFM1-interacting motif (UFIM) motif lies at 195–209 (AFVVEEEGVGETMTE). Positions 216–314 (LTEFINYIKQ…GRESPAQAPA (99 aa)) are mediates interaction with UFL1. The 45-residue stretch at 229 to 273 (VLLEDLASQVGLRTQDTINRIQDLLAEGTITGVIDDRGKFIYITP) folds into the PCI domain. K267 participates in a covalent cross-link: Glycyl lysine isopeptide (Lys-Gly) (interchain with G-Cter in UFM1).

It belongs to the DDRGK1 family. Component of the UFM1 ribosome E3 ligase (UREL) complex, composed of UFL1, DDRGK1 and CDK5RAP3. Interacts with (unphosphorylated) ERN1/IRE1-alpha; interaction is dependent on UFM1 and takes place in response to endoplasmic reticulum stress, regulating ERN1/IRE1-alpha stability. Interacts with NFKBIA. Interacts with SOX9. Ubiquitinated. Ubiquitination probably triggers proteasomal degradation and is negatively regulated by UFL1, the enzyme involved in the ufmylation of DDRGK1. Post-translationally, ufmylated; conjugated to ubiquitin-like protein UFM1, probably at Lys-267 by UFL1. The relevance of ufmylation is however unclear: as DDRGK1 acts as a substrate adapters for ufmylation, it is uncertain whether ufmylation is a collateral effect of ufmylation process or is required to regulate its activity. As to expression, widely expressed (at protein level). In the brain, highest levels in medulla oblongata, followed by cerebral cortex, cerebellum and frontal lobe.

Its subcellular location is the endoplasmic reticulum membrane. In terms of biological role, component of the UFM1 ribosome E3 ligase (UREL) complex, a multiprotein complex that catalyzes ufmylation of endoplasmic reticulum-docked proteins. The UREL complex plays a key role in ribosome recycling by mediating mono-ufmylation of the RPL26/uL24 subunit of the 60S ribosome following ribosome dissociation: ufmylation weakens the junction between post-termination 60S subunits and SEC61 translocons, promoting release and recycling of the large ribosomal subunit from the endoplasmic reticulum membrane. Ufmylation of RPL26/uL24 and subsequent 60S ribosome recycling either take place after normal termination of translation or after ribosome stalling during cotranslational translocation at the endoplasmic reticulum. Within the UREL complex, DDRGK1 tethers the complex to the endoplasmic reticulum membrane to restrict its activity to endoplasmic reticulum-docked ribosomes and acts as an ufmylation 'reader': following RPL26/uL24 ufmylation, DDRGK1 specifically binds to ufmylated RPL26/uL24 via its UFIM motif, resulting in stable association between the 60S ribosome and the UREL complex, followed by dissociation of the 60S ribosome subunit from the endoplasmic reticulum membrane. The UREL complex is also involved in reticulophagy in response to endoplasmic reticulum stress by promoting ufmylation of proteins such as CYB5R3 and RPN1, thereby promoting lysosomal degradation of ufmylated proteins. Ufmylation-dependent reticulophagy inhibits the unfolded protein response (UPR) by regulating ERN1/IRE1-alpha stability. Acts as a regulator of immunity by promoting differentiation of B-cells into plasma cells: acts by promoting expansion of the endoplasmic reticulum and regulating the unfolded protein response (UPR). May also be required for TRIP4 ufmylation. May play a role in NF-kappa-B-mediated transcription through regulation of the phosphorylation and the degradation of NFKBIA, the inhibitor of NF-kappa-B. Plays a role in cartilage development through SOX9, inhibiting the ubiquitin-mediated proteasomal degradation of this transcriptional regulator. Required for stabilization and ufmylation of ATG9A. The sequence is that of DDRGK domain-containing protein 1 from Homo sapiens (Human).